The sequence spans 356 residues: Photosystem II protein D1 (356 aa).

Helical transmembrane passes span 29-46 (YVGW…TATT), 118-133 (HFLI…QWEL), and 142-156 (WICV…AATA). His118 lines the chlorophyll a pocket. Tyr126 provides a ligand contact to pheophytin a. [CaMn4O5] cluster contacts are provided by Asp170 and Glu189. A helical membrane pass occupies residues 197–218 (FHMLGVAGVFGGSLFSAMHGSL). His198 lines the chlorophyll a pocket. A quinone contacts are provided by residues His215 and 264-265 (SF). His215 provides a ligand contact to Fe cation. Position 272 (His272) interacts with Fe cation. Residues 274–288 (FLGAWPVIGIWFTAM) traverse the membrane as a helical segment. Residues His332, Glu333, Asp342, and Ala344 each contribute to the [CaMn4O5] cluster site. Positions 345-356 (SAEPVSAPVING) are excised as a propeptide.

The protein belongs to the reaction center PufL/M/PsbA/D family. PSII is composed of 1 copy each of membrane proteins PsbA, PsbB, PsbC, PsbD, PsbE, PsbF, PsbH, PsbI, PsbJ, PsbK, PsbL, PsbM, PsbT, PsbX, PsbY, PsbZ, Psb30/Ycf12, peripheral proteins PsbO, CyanoQ (PsbQ), PsbU, PsbV and a large number of cofactors. It forms dimeric complexes. Requires The D1/D2 heterodimer binds P680, chlorophylls that are the primary electron donor of PSII, and subsequent electron acceptors. It shares a non-heme iron and each subunit binds pheophytin, quinone, additional chlorophylls, carotenoids and lipids. D1 provides most of the ligands for the Mn4-Ca-O5 cluster of the oxygen-evolving complex (OEC). There is also a Cl(-1) ion associated with D1 and D2, which is required for oxygen evolution. The PSII complex binds additional chlorophylls, carotenoids and specific lipids. as cofactor. Tyr-161 forms a radical intermediate that is referred to as redox-active TyrZ, YZ or Y-Z. In terms of processing, C-terminally processed by CtpA; processing is essential to allow assembly of the oxygen-evolving complex and thus photosynthetic growth.

The protein resides in the cellular thylakoid membrane. The catalysed reaction is 2 a plastoquinone + 4 hnu + 2 H2O = 2 a plastoquinol + O2. Photosystem II (PSII) is a light-driven water:plastoquinone oxidoreductase that uses light energy to abstract electrons from H(2)O, generating O(2) and a proton gradient subsequently used for ATP formation. It consists of a core antenna complex that captures photons, and an electron transfer chain that converts photonic excitation into a charge separation. The D1/D2 (PsbA/PsbD) reaction center heterodimer binds P680, the primary electron donor of PSII as well as several subsequent electron acceptors. This chain is Photosystem II protein D1, found in Crocosphaera subtropica (strain ATCC 51142 / BH68) (Cyanothece sp. (strain ATCC 51142)).